The following is a 155-amino-acid chain: Late embryogenesis abundant protein 2 (155 aa).

Positions 1 to 155 (MTSHDQSYRA…DKDHFPTNRH (155 aa)) are disordered. Basic and acidic residues-rich tracts occupy residues 11-21 (GEAKGRTEEKT) and 28-39 (IEDKAQAAKEKA). Residues 40–78 (QQAAQTAKDKTSQTAQAAKEKTQQTAQAAKDKTQQTTQA) show a composition bias toward low complexity. 2 tandem repeats follow at residues 53-63 (TAQAAKEKTQQ) and 64-74 (TAQAAKDKTQQ). Positions 53 to 74 (TAQAAKEKTQQTAQAAKDKTQQ) are 2 X 11 AA approximate tandem repeats of T-A-Q-A-A-K-E-K-T-Q-Q. The segment covering 79 to 95 (TKEKAQDTTGRAKEKGS) has biased composition (basic and acidic residues). Polar residues predominate over residues 97–120 (MGQSTKETAQSGKDNSAGFLQQTG). The segment covering 144–155 (DQDKDHFPTNRH) has biased composition (basic and acidic residues).

This sequence belongs to the LEA type 4 family. In terms of tissue distribution, highest expression is found in seeds. No expression detected in adult tissues.

The protein is Late embryogenesis abundant protein 2 of Cicer arietinum (Chickpea).